A 220-amino-acid polypeptide reads, in one-letter code: Cytidylate kinase (220 aa).

10–18 (GPASSGKST) contacts ATP.

The protein belongs to the cytidylate kinase family. Type 1 subfamily.

The protein resides in the cytoplasm. It carries out the reaction CMP + ATP = CDP + ADP. The catalysed reaction is dCMP + ATP = dCDP + ADP. This is Cytidylate kinase from Lactococcus lactis subsp. cremoris (strain MG1363).